Here is a 477-residue protein sequence, read N- to C-terminus: Glutamyl-tRNA(Gln) amidotransferase subunit A (477 aa).

Active-site charge relay system residues include K76 and S151. S175 serves as the catalytic Acyl-ester intermediate.

Belongs to the amidase family. GatA subfamily. As to quaternary structure, heterotrimer of A, B and C subunits.

It carries out the reaction L-glutamyl-tRNA(Gln) + L-glutamine + ATP + H2O = L-glutaminyl-tRNA(Gln) + L-glutamate + ADP + phosphate + H(+). Its function is as follows. Allows the formation of correctly charged Gln-tRNA(Gln) through the transamidation of misacylated Glu-tRNA(Gln) in organisms which lack glutaminyl-tRNA synthetase. The reaction takes place in the presence of glutamine and ATP through an activated gamma-phospho-Glu-tRNA(Gln). The protein is Glutamyl-tRNA(Gln) amidotransferase subunit A of Prosthecochloris aestuarii (strain DSM 271 / SK 413).